The primary structure comprises 113 residues: Protein ORF3 (113 aa).

2 hydrophobic regions span residues 1-21 (MGSP…CLCC) and 32-52 (AVVG…GLIL). The interval 27-67 (ASRLAAVVGGATAVPAVVSGVTGLILSPSPSPIFIQPTPSL) is interaction with host HPX. The tract at residues 47-71 (VTGLILSPSPSPIFIQPTPSLPMSF) is interaction with the capsid protein. S70 bears the Phosphoserine; by host mark. The homodimerization, and interaction with host AMBP/bikunin stretch occupies residues 71–113 (FHNPGLELALDSRPAPLAPLGVTSPSAPPLPPVVDLPQLGLRR). The interval 89-113 (PLGVTSPSAPPLPPVVDLPQLGLRR) is disordered. The interval 94–103 (SPSAPPLPPV) is interaction with host SRC, HCK, FYN, PIK3R3 and GRB2. The short motif at 95–98 (PSAP) is the PTAP/PSAP motif element.

It belongs to the hepevirus ORF3 protein family. In terms of assembly, forms homooligomers. Interacts with host SRC, HCK, FYN, PIK3R3 and GRB2 (via SH3 domain); binding does not activate the kinases. Interacts with host AMBP/bikunin and AMBP/alpha-1-microglobulin peptides. Interacts with host HPX/hemopexin. Interacts (when phosphorylated) with capsid protein ORF2. Interacts with host TSG101; this interaction plays a role in viral release from the host cell. Interacts with host SIRPA; this interaction down-regulates the phosphorylation of host IRF3. Post-translationally, palmitoylated in the N-terminus.

The protein localises to the host endoplasmic reticulum membrane. The protein resides in the host cytoplasm. It localises to the host cytoskeleton. It is found in the virion. Its subcellular location is the host cell membrane. Small multifunctional phosphoprotein involved in virion morphogenesis, egress and counteracting host innate immunity. Plays critical roles in the final steps of viral release by interacting with host TSG101, a member of the vacuolar protein-sorting pathway and using other cellular host proteins involved in vesicle formation pathway. Also acts as a viroporin and forms ion conductive pores allowing viral particle release. Impairs the generation of type I interferon by down-regulating host TLR3 and TLR7 as well as their downstream signaling pathways. Down-regulates the phosphorylation of host IRF3 via the interaction with host SIRP-alpha, thereby inhibiting IFN-I expression. Interacts with host microtubules. In Bandicota bengalensis (lesser bandicoot rat), this protein is Protein ORF3.